The sequence spans 361 residues: dTDP-glucose 4,6-dehydratase (361 aa).

Residues 11-12, 32-35, 58-59, 80-84, and threonine 99 each bind NAD(+); these read FI, DKLT, DI, and LAAES. Substrate is bound at residue serine 84. Threonine 133 is a substrate binding site. Aspartate 134 (proton donor) is an active-site residue. Residues glutamate 135 and tyrosine 167 each act as proton acceptor in the active site. Residue 167-171 participates in NAD(+) binding; that stretch reads YSASK. Position 196 (asparagine 196) interacts with substrate. Residue asparagine 197 coordinates NAD(+). Substrate-binding positions include 206–207, 222–224, arginine 231, asparagine 266, and 296–300; these read KL, PIY, and DRPGH.

Belongs to the NAD(P)-dependent epimerase/dehydratase family. dTDP-glucose dehydratase subfamily. As to quaternary structure, homodimer. Requires NAD(+) as cofactor.

The enzyme catalyses dTDP-alpha-D-glucose = dTDP-4-dehydro-6-deoxy-alpha-D-glucose + H2O. The protein operates within carbohydrate biosynthesis; dTDP-L-rhamnose biosynthesis. It participates in bacterial outer membrane biogenesis; LPS O-antigen biosynthesis. Its function is as follows. Catalyzes the dehydration of dTDP-D-glucose to form dTDP-6-deoxy-D-xylo-4-hexulose via a three-step process involving oxidation, dehydration and reduction. The chain is dTDP-glucose 4,6-dehydratase (rfbB) from Escherichia coli.